The chain runs to 274 residues: Large ribosomal subunit protein uL2 (274 aa).

Positions 1–23 (MAIKIYRPTSPGRRHHSVSSFEE) are disordered.

Belongs to the universal ribosomal protein uL2 family. As to quaternary structure, part of the 50S ribosomal subunit. Forms a bridge to the 30S subunit in the 70S ribosome.

Its function is as follows. One of the primary rRNA binding proteins. Required for association of the 30S and 50S subunits to form the 70S ribosome, for tRNA binding and peptide bond formation. It has been suggested to have peptidyltransferase activity; this is somewhat controversial. Makes several contacts with the 16S rRNA in the 70S ribosome. This is Large ribosomal subunit protein uL2 from Dehalococcoides mccartyi (strain ATCC BAA-2100 / JCM 16839 / KCTC 5957 / BAV1).